The sequence spans 228 residues: LexA repressor (228 aa).

A DNA-binding region (H-T-H motif) is located at residues 26–46 (FDEMKDALDLRSKSGIHRLIT). Catalysis depends on for autocatalytic cleavage activity residues Ser149 and Lys187.

It belongs to the peptidase S24 family. As to quaternary structure, homodimer.

It carries out the reaction Hydrolysis of Ala-|-Gly bond in repressor LexA.. In terms of biological role, represses a number of genes involved in the response to DNA damage (SOS response), including recA and lexA. In the presence of single-stranded DNA, RecA interacts with LexA causing an autocatalytic cleavage which disrupts the DNA-binding part of LexA, leading to derepression of the SOS regulon and eventually DNA repair. The sequence is that of LexA repressor from Cereibacter sphaeroides (strain ATCC 17025 / ATH 2.4.3) (Rhodobacter sphaeroides).